Reading from the N-terminus, the 599-residue chain is UvrABC system protein C (599 aa).

The region spanning Gln18 to Ile96 is the GIY-YIG domain. The 36-residue stretch at Lys207–Val242 folds into the UVR domain.

Belongs to the UvrC family. As to quaternary structure, interacts with UvrB in an incision complex.

The protein localises to the cytoplasm. In terms of biological role, the UvrABC repair system catalyzes the recognition and processing of DNA lesions. UvrC both incises the 5' and 3' sides of the lesion. The N-terminal half is responsible for the 3' incision and the C-terminal half is responsible for the 5' incision. The chain is UvrABC system protein C from Acinetobacter baylyi (strain ATCC 33305 / BD413 / ADP1).